Here is a 394-residue protein sequence, read N- to C-terminus: Elongation factor Tu 2 (394 aa).

In terms of domain architecture, tr-type G spans 10-204 (KPHVNVGTIG…FLDSYIPEPE (195 aa)). Positions 19-26 (GHVDHGKT) are G1. 19 to 26 (GHVDHGKT) contacts GTP. Thr-26 is a binding site for Mg(2+). The interval 60–64 (GITIN) is G2. The tract at residues 81–84 (DCPG) is G3. Residues 81 to 85 (DCPGH) and 136 to 139 (NKCD) contribute to the GTP site. The interval 136 to 139 (NKCD) is G4. The tract at residues 174–176 (SAL) is G5.

It belongs to the TRAFAC class translation factor GTPase superfamily. Classic translation factor GTPase family. EF-Tu/EF-1A subfamily. Monomer.

Its subcellular location is the cytoplasm. The enzyme catalyses GTP + H2O = GDP + phosphate + H(+). Its function is as follows. GTP hydrolase that promotes the GTP-dependent binding of aminoacyl-tRNA to the A-site of ribosomes during protein biosynthesis. The polypeptide is Elongation factor Tu 2 (Escherichia coli O139:H28 (strain E24377A / ETEC)).